The following is a 249-amino-acid chain: Diaminopimelate epimerase (249 aa).

Substrate is bound by residues Asn-11 and Asn-60. The active-site Proton donor is Cys-69. Substrate-binding positions include 70 to 71, Asn-164, and 182 to 183; these read GN and ER. Cys-192 functions as the Proton acceptor in the catalytic mechanism. 193-194 is a substrate binding site; it reads GT.

This sequence belongs to the diaminopimelate epimerase family. As to quaternary structure, homodimer.

The protein resides in the cytoplasm. It carries out the reaction (2S,6S)-2,6-diaminopimelate = meso-2,6-diaminopimelate. It functions in the pathway amino-acid biosynthesis; L-lysine biosynthesis via DAP pathway; DL-2,6-diaminopimelate from LL-2,6-diaminopimelate: step 1/1. In terms of biological role, catalyzes the stereoinversion of LL-2,6-diaminopimelate (L,L-DAP) to meso-diaminopimelate (meso-DAP), a precursor of L-lysine and an essential component of the bacterial peptidoglycan. In Campylobacter jejuni (strain RM1221), this protein is Diaminopimelate epimerase.